Reading from the N-terminus, the 326-residue chain is tRNA uridine(34) hydroxylase (326 aa).

Residues 123–217 form the Rhodanese domain; it reads ADPEVFVVDT…YLEEVPEEES (95 aa). Residue Cys177 is the Cysteine persulfide intermediate of the active site. The disordered stretch occupies residues 293 to 326; sequence AVRGEQHVGGESAKQRQQRRAEKLAKKDVQRKQA. Residues 311–326 are compositionally biased toward basic and acidic residues; the sequence is RRAEKLAKKDVQRKQA.

Belongs to the TrhO family.

It catalyses the reaction uridine(34) in tRNA + AH2 + O2 = 5-hydroxyuridine(34) in tRNA + A + H2O. Catalyzes oxygen-dependent 5-hydroxyuridine (ho5U) modification at position 34 in tRNAs. This Vibrio campbellii (strain ATCC BAA-1116) protein is tRNA uridine(34) hydroxylase.